We begin with the raw amino-acid sequence, 962 residues long: Leucine--tRNA ligase (962 aa).

The 'HIGH' region signature appears at 40–51 (PYPSGAGLHVGH). A disordered region spans residues 548-570 (SRKLSGQHDEPNSNVTPSAVEGS). Positions 737 to 741 (KMSKS) match the 'KMSKS' region motif. K740 serves as a coordination point for ATP.

Belongs to the class-I aminoacyl-tRNA synthetase family.

It is found in the cytoplasm. It catalyses the reaction tRNA(Leu) + L-leucine + ATP = L-leucyl-tRNA(Leu) + AMP + diphosphate. The chain is Leucine--tRNA ligase from Christiangramia forsetii (strain DSM 17595 / CGMCC 1.15422 / KT0803) (Gramella forsetii).